Here is a 102-residue protein sequence, read N- to C-terminus: Acid shock protein (102 aa).

The first 21 residues, Met-1 to Ala-21, serve as a signal peptide directing secretion. Residues Ala-22–Lys-41 are compositionally biased toward low complexity. Residues Ala-22–Gln-58 constitute a propeptide that is removed on maturation. The tract at residues Ala-22–Ala-102 is disordered. Basic residues predominate over residues Ala-80–His-90. A compositionally biased stretch (low complexity) spans Gln-91 to Ala-102.

The protein belongs to the Asr family. Proteolytic processing gives rise to the active protein.

It is found in the periplasm. Required for growth and/or survival at acidic conditions. The polypeptide is Acid shock protein (Escherichia coli O45:K1 (strain S88 / ExPEC)).